A 347-amino-acid chain; its full sequence is NADH-ubiquinone oxidoreductase chain 2 (347 aa).

11 helical membrane-spanning segments follow: residues 3-23 (PLIM…VMTG), 25-45 (HWLM…PMLM), 59-79 (YFFT…INLM), 96-116 (IIMT…FWVP), 127-147 (GLIL…MISP), 148-168 (GINL…GGWG), 178-198 (IMAY…IYNP), 201-221 (TLLN…LFMI), 247-267 (TLLS…WMII), 276-296 (IVLP…YMRL), and 325-345 (LLTP…MMMI).

The protein belongs to the complex I subunit 2 family. In terms of assembly, core subunit of respiratory chain NADH dehydrogenase (Complex I) which is composed of 45 different subunits. Interacts with TMEM242.

Its subcellular location is the mitochondrion inner membrane. The catalysed reaction is a ubiquinone + NADH + 5 H(+)(in) = a ubiquinol + NAD(+) + 4 H(+)(out). Its function is as follows. Core subunit of the mitochondrial membrane respiratory chain NADH dehydrogenase (Complex I) which catalyzes electron transfer from NADH through the respiratory chain, using ubiquinone as an electron acceptor. Essential for the catalytic activity and assembly of complex I. The polypeptide is NADH-ubiquinone oxidoreductase chain 2 (Ozimops beccarii (Beccari's free-tailed bat)).